We begin with the raw amino-acid sequence, 949 residues long: Glycine dehydrogenase (decarboxylating) (949 aa).

Residue Lys-699 is modified to N6-(pyridoxal phosphate)lysine.

This sequence belongs to the GcvP family. In terms of assembly, the glycine cleavage system is composed of four proteins: P, T, L and H. Pyridoxal 5'-phosphate is required as a cofactor.

The catalysed reaction is N(6)-[(R)-lipoyl]-L-lysyl-[glycine-cleavage complex H protein] + glycine + H(+) = N(6)-[(R)-S(8)-aminomethyldihydrolipoyl]-L-lysyl-[glycine-cleavage complex H protein] + CO2. Its function is as follows. The glycine cleavage system catalyzes the degradation of glycine. The P protein binds the alpha-amino group of glycine through its pyridoxal phosphate cofactor; CO(2) is released and the remaining methylamine moiety is then transferred to the lipoamide cofactor of the H protein. The chain is Glycine dehydrogenase (decarboxylating) from Roseobacter denitrificans (strain ATCC 33942 / OCh 114) (Erythrobacter sp. (strain OCh 114)).